The sequence spans 101 residues: Small ribosomal subunit protein bS18c (101 aa).

Belongs to the bacterial ribosomal protein bS18 family. In terms of assembly, part of the 30S ribosomal subunit.

The protein resides in the plastid. The protein localises to the chloroplast. The protein is Small ribosomal subunit protein bS18c of Nymphaea alba (White water-lily).